Consider the following 119-residue polypeptide: Probable prefoldin subunit 6 (119 aa).

It belongs to the prefoldin subunit beta family. In terms of assembly, heterohexamer of two PFD-alpha type and four PFD-beta type subunits. May interact with MSP1.

In terms of biological role, binds specifically to cytosolic chaperonin (c-CPN) and transfers target proteins to it. Binds to nascent polypeptide chain and promotes folding in an environment in which there are many competing pathways for nonnative proteins. This is Probable prefoldin subunit 6 from Plasmodium falciparum (isolate 3D7).